The primary structure comprises 431 residues: Argininosuccinate lyase (431 aa).

This sequence belongs to the lyase 1 family. Argininosuccinate lyase subfamily.

The protein resides in the cytoplasm. It carries out the reaction 2-(N(omega)-L-arginino)succinate = fumarate + L-arginine. The protein operates within amino-acid biosynthesis; L-arginine biosynthesis; L-arginine from L-ornithine and carbamoyl phosphate: step 3/3. This chain is Argininosuccinate lyase, found in Xanthomonas oryzae pv. oryzae (strain MAFF 311018).